Consider the following 196-residue polypeptide: Protein LIGHT-DEPENDENT SHORT HYPOCOTYLS 6 (196 aa).

The span at 1 to 16 (MESADSGRSDPVKGDD) shows a compositional bias: basic and acidic residues. 2 disordered regions span residues 1-36 (MESA…ESQK) and 149-196 (ARGI…AVPP). The ALOG domain occupies 31-158 (RYESQKRRDW…ARGIPYEKKK (128 aa)). The Nuclear localization signal motif lies at 156–160 (KKKRK).

This sequence belongs to the plant homeotic and developmental regulators ALOG protein family.

The protein localises to the nucleus. In terms of biological role, probable transcription regulator that acts as a developmental regulator by promoting cell growth in response to light. This chain is Protein LIGHT-DEPENDENT SHORT HYPOCOTYLS 6 (LSH6), found in Arabidopsis thaliana (Mouse-ear cress).